The primary structure comprises 308 residues: MTNDALIAALAHLVSEGRNPDTMDIDLLPSLDIVQRLNQQDKLVPLAVEKVLPEIALAVDKITDAFKVGGRLVYMGAGTSGRLGVLDASECPPTFGVSDKMVVGLIAGGPEAILKAKEGAEDSPVLGEQDLKDIKFTNLDVVVGIAASGRTPYVIGGLEYANEIGATTIALSCNPDSPIADIADVAISPVVGPEALTGSTRLKSGTAQKLVLNMLTTASMIRLGKSYQNLMVDVKATNNKLVARAARIVMQATDCSKEQATEVLKQTDYEVKLAILMILTDLDIESARAHLHHQDGFLRKAVESHQPK.

An SIS domain is found at 62–225 (ITDAFKVGGR…TTASMIRLGK (164 aa)). Residue Glu90 is the Proton donor of the active site. Residue Glu121 is part of the active site.

The protein belongs to the GCKR-like family. MurNAc-6-P etherase subfamily. As to quaternary structure, homodimer.

It catalyses the reaction N-acetyl-D-muramate 6-phosphate + H2O = N-acetyl-D-glucosamine 6-phosphate + (R)-lactate. Its pathway is amino-sugar metabolism; 1,6-anhydro-N-acetylmuramate degradation. It participates in amino-sugar metabolism; N-acetylmuramate degradation. It functions in the pathway cell wall biogenesis; peptidoglycan recycling. Functionally, specifically catalyzes the cleavage of the D-lactyl ether substituent of MurNAc 6-phosphate, producing GlcNAc 6-phosphate and D-lactate. Together with AnmK, is also required for the utilization of anhydro-N-acetylmuramic acid (anhMurNAc) either imported from the medium or derived from its own cell wall murein, and thus plays a role in cell wall recycling. The polypeptide is N-acetylmuramic acid 6-phosphate etherase (Vibrio campbellii (strain ATCC BAA-1116)).